Consider the following 149-residue polypeptide: Calmodulin-like protein 3 (149 aa).

4 consecutive EF-hand domains span residues 8–43 (EQIA…LGQN), 44–79 (PTEA…KMKD), 81–116 (DSEE…LGEK), and 117–149 (LSDE…LVSK). Positions 21, 23, 25, 27, 32, 57, 59, 61, 63, 68, 94, 96, 98, 105, 130, 132, 134, 136, and 141 each coordinate Ca(2+).

Belongs to the calmodulin family. Interacts with MYO10, the interaction is calcium-dependent and essential for MYO10 function in filopodial extension.

Its function is as follows. May function as a specific light chain of unconventional myosin-10 (MYO10), also enhances MYO10 translation, possibly by acting as a chaperone for the emerging MYO10 heavy chain protein. May compete with calmodulin by binding, with different affinities, to cellular substrates. This is Calmodulin-like protein 3 (Calml3) from Rattus norvegicus (Rat).